A 383-amino-acid chain; its full sequence is Cell division protein FtsZ (383 aa).

GTP-binding positions include 20 to 24 (GGGGN), 107 to 109 (GTG), Glu-138, Arg-142, and Asn-186.

The protein belongs to the FtsZ family. In terms of assembly, homodimer. Polymerizes to form a dynamic ring structure in a strictly GTP-dependent manner. Interacts directly with several other division proteins.

It localises to the cytoplasm. Functionally, essential cell division protein that forms a contractile ring structure (Z ring) at the future cell division site. The regulation of the ring assembly controls the timing and the location of cell division. One of the functions of the FtsZ ring is to recruit other cell division proteins to the septum to produce a new cell wall between the dividing cells. Binds GTP and shows GTPase activity. The chain is Cell division protein FtsZ from Escherichia coli O157:H7.